Reading from the N-terminus, the 179-residue chain is Adenine phosphoribosyltransferase (179 aa).

Belongs to the purine/pyrimidine phosphoribosyltransferase family. As to quaternary structure, homodimer.

It is found in the cytoplasm. It carries out the reaction AMP + diphosphate = 5-phospho-alpha-D-ribose 1-diphosphate + adenine. It functions in the pathway purine metabolism; AMP biosynthesis via salvage pathway; AMP from adenine: step 1/1. Its function is as follows. Catalyzes a salvage reaction resulting in the formation of AMP, that is energically less costly than de novo synthesis. In Helicobacter pylori (strain G27), this protein is Adenine phosphoribosyltransferase.